Here is a 302-residue protein sequence, read N- to C-terminus: uncharacterized protein (302 aa).

2 disordered regions span residues 1-167 and 180-199; these read MPCR…QSSE and PSLCPSQTGTASTASPQRAS. The span at 39-54 shows a compositional bias: basic and acidic residues; that stretch reads EESHAPSRDPRDHQGS. 2 stretches are compositionally biased toward polar residues: residues 123–133 and 183–197; these read LSTSSCASVSR and CPSQTGTASTASPQR.

This is an uncharacterized protein from Homo sapiens (Human).